Reading from the N-terminus, the 274-residue chain is Cytochrome b-c1 complex subunit Rieske, mitochondrial (274 aa).

At 79–103 (SHTDIKVPDFSDYRRPEVLDSTKSS) the chain is on the mitochondrial matrix side. The chain crosses the membrane as a helical span at residues 104-140 (KESSEARKGFSYLVTATTTVGVAYAAKNVVSQFVSSM). The Mitochondrial intermembrane portion of the chain corresponds to 141–274 (SASADVLAMS…FTSDDMVIVG (134 aa)). The Rieske domain maps to 187 to 272 (EAAVEVSQLR…YEFTSDDMVI (86 aa)). Residues Cys-217, His-219, Cys-236, His-239, and Ser-241 each contribute to the [2Fe-2S] cluster site. A disulfide bridge links Cys-222 with Cys-238.

Belongs to the Rieske iron-sulfur protein family. As to quaternary structure, component of the ubiquinol-cytochrome c oxidoreductase (cytochrome b-c1 complex, complex III, CIII), a multisubunit enzyme composed of 11 subunits. The complex is composed of 3 respiratory subunits cytochrome b, cytochrome c1 and Rieske protein UQCRFS1, 2 core protein subunits UQCRC1/QCR1 and UQCRC2/QCR2, and 6 low-molecular weight protein subunits UQCRH/QCR6, UQCRB/QCR7, UQCRQ/QCR8, UQCR10/QCR9, UQCR11/QCR10 and subunit 9, the cleavage product of Rieske protein UQCRFS1. The complex exists as an obligatory dimer and forms supercomplexes (SCs) in the inner mitochondrial membrane with NADH-ubiquinone oxidoreductase (complex I, CI) and cytochrome c oxidase (complex IV, CIV), resulting in different assemblies (supercomplex SCI(1)III(2)IV(1) and megacomplex MCI(2)III(2)IV(2)). Incorporation of the Rieske protein UQCRFS1 is the penultimate step in complex III assembly. Interacts with TTC19, which is involved in the clearance of UQCRFS1 fragments. In terms of assembly, component of the ubiquinol-cytochrome c oxidoreductase (cytochrome b-c1 complex, complex III, CIII). Subunit 9 corresponds to the mitochondrial targeting sequence (MTS) of Rieske protein UQCRFS1. It is retained after processing and incorporated inside complex III, where it remains bound to the complex and localizes between the 2 core subunits UQCRC1/QCR1 and UQCRC2/QCR2. Requires [2Fe-2S] cluster as cofactor. Proteolytic processing is necessary for the correct insertion of UQCRFS1 in the complex III dimer. Several fragments are generated during UQCRFS1 insertion, most probably due to the endogenous matrix-processing peptidase (MPP) activity of the 2 core protein subunits UQCRC1/QCR1 and UQCRC2/QCR2, which are homologous to the 2 mitochondrial-processing peptidase (MPP) subunits beta-MPP and alpha-MPP respectively. The action of the protease is also necessary for the clearance of the UQCRFS1 fragments.

The protein resides in the mitochondrion inner membrane. The enzyme catalyses a quinol + 2 Fe(III)-[cytochrome c](out) = a quinone + 2 Fe(II)-[cytochrome c](out) + 2 H(+)(out). In terms of biological role, component of the ubiquinol-cytochrome c oxidoreductase, a multisubunit transmembrane complex that is part of the mitochondrial electron transport chain which drives oxidative phosphorylation. The respiratory chain contains 3 multisubunit complexes succinate dehydrogenase (complex II, CII), ubiquinol-cytochrome c oxidoreductase (cytochrome b-c1 complex, complex III, CIII) and cytochrome c oxidase (complex IV, CIV), that cooperate to transfer electrons derived from NADH and succinate to molecular oxygen, creating an electrochemical gradient over the inner membrane that drives transmembrane transport and the ATP synthase. The cytochrome b-c1 complex catalyzes electron transfer from ubiquinol to cytochrome c, linking this redox reaction to translocation of protons across the mitochondrial inner membrane, with protons being carried across the membrane as hydrogens on the quinol. In the process called Q cycle, 2 protons are consumed from the matrix, 4 protons are released into the intermembrane space and 2 electrons are passed to cytochrome c. The Rieske protein is a catalytic core subunit containing a [2Fe-2S] iron-sulfur cluster. It cycles between 2 conformational states during catalysis to transfer electrons from the quinol bound in the Q(0) site in cytochrome b to cytochrome c1. Incorporation of UQCRFS1 is the penultimate step in complex III assembly. Functionally, component of the ubiquinol-cytochrome c oxidoreductase (cytochrome b-c1 complex, complex III, CIII). UQCRFS1 undergoes proteolytic processing once it is incorporated in the complex III dimer. One of the fragments, called subunit 9, corresponds to its mitochondrial targeting sequence (MTS). The proteolytic processing is necessary for the correct insertion of UQCRFS1 in the complex III dimer, but the persistence of UQCRFS1-derived fragments may prevent newly imported UQCRFS1 to be processed and assembled into complex III and is detrimental for the complex III structure and function. This is Cytochrome b-c1 complex subunit Rieske, mitochondrial (UQCRFS1) from Bos taurus (Bovine).